The primary structure comprises 417 residues: Odorant receptor 65a (417 aa).

Topologically, residues 1 to 62 (MTELRSERKN…MNSEQRRLPR (62 aa)) are cytoplasmic. The helical transmembrane segment at 63–83 (IVAWQYFVSIQLATALASLFY) threads the bilayer. Residues 84 to 98 (GISESIGDIVNLGRD) lie on the Extracellular side of the membrane. The helical transmembrane segment at 99-119 (LVFIITIIFICFRLVFFAQYA) threads the bilayer. Over 120 to 152 (GELDVIIDALEDIYHWSIKGPATKEVQETKRLH) the chain is Cytoplasmic. Residues 153–173 (FLLFMALIITWFSFLILFMLI) form a helical membrane-spanning segment. At 174 to 206 (KISTPFWIESQTLPFHVSWPFQLHDPSKHPIAY) the chain is on the extracellular side. Residues 207-227 (IIIFVSQSTTMLYFLIWLGVV) traverse the membrane as a helical segment. Over 228–290 (ENMGVSLFFE…TDRCNHIFNG (63 aa)) the chain is Cytoplasmic. A helical transmembrane segment spans residues 291–311 (AFIMQMLINFLLVSLSLFEVL). Residues 312-316 (AAKKN) are Extracellular-facing. The helical transmembrane segment at 317 to 337 (PQVAVEYMIIMLMTLGHLSFW) threads the bilayer. Topologically, residues 338–393 (SKFGDMFSKESEQVALAVYEAYDPNVGSKSIHRQFCFFIQRAQKPLIMKASPFPPF) are cytoplasmic. The helical transmembrane segment at 394 to 414 (NLENYMFILKQCYSILTILAN) threads the bilayer. Residues 415–417 (TLE) lie on the Extracellular side of the membrane.

Belongs to the insect chemoreceptor superfamily. Heteromeric odorant receptor channel (TC 1.A.69) family. Or49a subfamily. In terms of assembly, interacts with Orco. Complexes exist early in the endomembrane system in olfactory sensory neurons (OSNs), coupling these complexes to the conserved ciliary trafficking pathway. Expressed in olfactory sensory neurons in the antenna.

The protein resides in the cell membrane. In terms of biological role, odorant receptor which mediates acceptance or avoidance behavior, depending on its substrates. The odorant receptor repertoire encodes a large collection of odor stimuli that vary widely in identity, intensity, and duration. May form a complex with Orco to form odorant-sensing units, providing sensitive and prolonged odorant signaling and calcium permeability. Involved in olfactory communication for modulating aggression through the sensing of the male-specific pheromone 11-cis-vaccenyl acetate (cVA). Although acute exposure to cVA elicites aggression through Or67d olfactory receptor neurons (ORNs), chronic cVA exposure reduces aggression through Or65a ORNs. Moreover, cVA leads to generalized learning with mated females. It is a major component of the male cuticular hydrocarbon profile, but it is not found on virgin females. During copulation, cVA is transferred to the female in ejaculate along with sperm and peptides that decrease her sexual receptivity. The sequence is that of Odorant receptor 65a (Or65a) from Drosophila melanogaster (Fruit fly).